Here is an 82-residue protein sequence, read N- to C-terminus: Small ribosomal subunit protein bS16 (82 aa).

It belongs to the bacterial ribosomal protein bS16 family.

The chain is Small ribosomal subunit protein bS16 from Shewanella sp. (strain ANA-3).